The following is a 395-amino-acid chain: MRRRQDQAPPRAGEQVRVDLGRANLLAAHQLRQRQQRAQYGLTLRGGVEVHHADQQLQERADGAEPVDQHGPPCLVGIRVQRRGQLEQRGDRRGQLVPGHHLLDGRPHPFQALHFRRRDLPGVGVDLLARGVEHDLERGRQLRRRPLHARQRLQLLLRALALRPGQQLRRDQHLQQVQRVVHRPRREVHGGGQQRRQAASVGVPAQQRRLAVHPVPGQLRQPARRYPRHINGAHSERGDLLRPLQRPLHLRTRHPHRPAPQPVQLRDPLPGRHRPAKESSTARCPVLSIPCRLSHSRWFAASRTEATSLVSVVTPGSSTRRSLSHPAAASNNAFGPSPVVQARASTHSRSSPSASANSRYSKTRRSSRTCSSRVFSRSPYSFSTDGSPMSSCSAR.

2 disordered regions span residues 185-282 (RREV…SSTA) and 316-372 (GSST…TCSS). The span at 248–257 (LHLRTRHPHR) shows a compositional bias: basic residues. Low complexity predominate over residues 342-360 (ARASTHSRSSPSASANSRY).

This is an uncharacterized protein from Streptomyces fradiae (Streptomyces roseoflavus).